Consider the following 257-residue polypeptide: Thiazole synthase (257 aa).

Catalysis depends on K100, which acts as the Schiff-base intermediate with DXP. 1-deoxy-D-xylulose 5-phosphate contacts are provided by residues G161, 187–188 (AG), and 209–210 (NT).

It belongs to the ThiG family. As to quaternary structure, homotetramer. Forms heterodimers with either ThiH or ThiS.

Its subcellular location is the cytoplasm. It catalyses the reaction [ThiS sulfur-carrier protein]-C-terminal-Gly-aminoethanethioate + 2-iminoacetate + 1-deoxy-D-xylulose 5-phosphate = [ThiS sulfur-carrier protein]-C-terminal Gly-Gly + 2-[(2R,5Z)-2-carboxy-4-methylthiazol-5(2H)-ylidene]ethyl phosphate + 2 H2O + H(+). It participates in cofactor biosynthesis; thiamine diphosphate biosynthesis. Its function is as follows. Catalyzes the rearrangement of 1-deoxy-D-xylulose 5-phosphate (DXP) to produce the thiazole phosphate moiety of thiamine. Sulfur is provided by the thiocarboxylate moiety of the carrier protein ThiS. In vitro, sulfur can be provided by H(2)S. In Pelagibacter ubique (strain HTCC1062), this protein is Thiazole synthase.